Reading from the N-terminus, the 34-residue chain is U10-ctenitoxin-Pr1a (34 aa).

Intrachain disulfides connect cysteine 2-cysteine 15, cysteine 9-cysteine 20, cysteine 14-cysteine 31, and cysteine 22-cysteine 29.

Expressed by the venom gland.

It localises to the secreted. Functionally, non-toxic to mice and insects. This chain is U10-ctenitoxin-Pr1a, found in Phoneutria reidyi (Brazilian Amazonian armed spider).